The following is a 265-amino-acid chain: Glutamate 5-kinase (265 aa).

Lys15 provides a ligand contact to ATP. Positions 55, 142, and 158 each coordinate substrate. ATP-binding positions include 178 to 179 and 220 to 226; these read SD and TGGMVTK.

Belongs to the glutamate 5-kinase family.

Its subcellular location is the cytoplasm. It catalyses the reaction L-glutamate + ATP = L-glutamyl 5-phosphate + ADP. The protein operates within amino-acid biosynthesis; L-proline biosynthesis; L-glutamate 5-semialdehyde from L-glutamate: step 1/2. In terms of biological role, catalyzes the transfer of a phosphate group to glutamate to form L-glutamate 5-phosphate. The sequence is that of Glutamate 5-kinase from Lactiplantibacillus plantarum (strain ATCC BAA-793 / NCIMB 8826 / WCFS1) (Lactobacillus plantarum).